The primary structure comprises 535 residues: Keratin, type II cytoskeletal 79 (535 aa).

The segment covering 1 to 12 (MRSSVSRQTYST) has biased composition (polar residues). The interval 1–52 (MRSSVSRQTYSTKGGFSSNSASGGSGSQARTSFSSVTVSRSSGSGGGAHCGP) is disordered. The head stretch occupies residues 1 to 141 (MRSSVSRQTY…DPEIQRVRTQ (141 aa)). The span at 32–42 (SFSSVTVSRSS) shows a compositional bias: low complexity. Positions 43 to 52 (GSGGGAHCGP) are enriched in gly residues. The tract at residues 142–177 (EREQIKTLNNKFASFIDKVRFLEQQNKVLETKWALL) is coil 1A. The IF rod domain maps to 142 to 457 (EREQIKTLNN…KLLESEESRM (316 aa)). The tract at residues 178–198 (QEQGQNLGVTRNNLEPLFEAY) is linker 1. A coil 1B region spans residues 199–290 (LGSMRSTLDR…QLYEMELSQV (92 aa)). The tract at residues 291–314 (QTHVSNTNVVLSMDNNRNLDLDSI) is linker 12. The interval 315-453 (IAEVKAQYEL…ATYRKLLESE (139 aa)) is coil 2. The interval 454 to 535 (ESRMSGECPS…TTVKTSSQRY (82 aa)) is tail.

Belongs to the intermediate filament family. Heterotetramer of two type I and two type II keratins. As to expression, expressed in skeletal muscle, skin and scalp, but not in any other tissues or organs examined.

The chain is Keratin, type II cytoskeletal 79 (KRT79) from Homo sapiens (Human).